The primary structure comprises 482 residues: Zinc finger CCCH domain-containing protein 40 (482 aa).

The C3H1-type zinc-finger motif lies at R157–P184. Residues R228–P301 form the RRM domain. 2 stretches are compositionally biased toward low complexity: residues S329–Q347 and P389–Y428. Positions S329–N482 are disordered. Positions M429–Q446 are enriched in pro residues. A compositionally biased stretch (low complexity) spans P452–A466. Residues V473 to N482 are compositionally biased toward pro residues.

The chain is Zinc finger CCCH domain-containing protein 40 from Oryza sativa subsp. japonica (Rice).